A 101-amino-acid polypeptide reads, in one-letter code: Apolipoprotein C-II (101 aa).

A signal peptide spans 1–22 (MGTRFLLALFLVLLVLGFEVQG). A lipid binding region spans residues 66–74 (AVDEKLRDM). A lipoprotein lipase cofactor region spans residues 78–101 (STAAVSTYAGIFTDQVLSMLRGEE).

It belongs to the apolipoprotein C2 family. Proapolipoprotein C-II is synthesized as a sialic acid containing glycoprotein which is subsequently desialylated prior to its proteolytic processing. Post-translationally, proapolipoprotein C-II, the major form found in plasma undergoes proteolytic cleavage of its N-terminal hexapeptide to generate apolipoprotein C-II, which occurs as the minor form in plasma.

The protein resides in the secreted. Component of chylomicrons, very low-density lipoproteins (VLDL), low-density lipoproteins (LDL), and high-density lipoproteins (HDL) in plasma. Plays an important role in lipoprotein metabolism as an activator of lipoprotein lipase. Both proapolipoprotein C-II and apolipoprotein C-II can activate lipoprotein lipase. This Saimiri boliviensis boliviensis (Bolivian squirrel monkey) protein is Apolipoprotein C-II (APOC2).